The chain runs to 544 residues: Chaperonin GroEL 1 (544 aa).

Residues 29–32 (TLGP), 86–90 (DGTTT), glycine 413, 479–481 (NAA), and aspartate 495 each bind ATP.

This sequence belongs to the chaperonin (HSP60) family. As to quaternary structure, forms a cylinder of 14 subunits composed of two heptameric rings stacked back-to-back. Interacts with the co-chaperonin GroES.

It localises to the cytoplasm. It carries out the reaction ATP + H2O + a folded polypeptide = ADP + phosphate + an unfolded polypeptide.. Together with its co-chaperonin GroES, plays an essential role in assisting protein folding. The GroEL-GroES system forms a nano-cage that allows encapsulation of the non-native substrate proteins and provides a physical environment optimized to promote and accelerate protein folding. The protein is Chaperonin GroEL 1 of Trichormus variabilis (strain ATCC 29413 / PCC 7937) (Anabaena variabilis).